The sequence spans 87 residues: Conotoxin Cl12.3 (87 aa).

An N-terminal signal peptide occupies residues 1-19 (MKLTCVLVVLLLFLPYGDL). A propeptide spanning residues 20–42 (ITNNYIGGAARKVTPWRRNLKTR) is cleaved from the precursor.

The protein belongs to the conotoxin O1 superfamily. Post-translationally, contains 4 disulfide bonds. As to expression, expressed by the venom duct.

It localises to the secreted. This is Conotoxin Cl12.3 from Californiconus californicus (California cone).